The primary structure comprises 137 residues: Small ribosomal subunit protein uS12 (137 aa).

Positions 1 to 26 (MPTINQLVTKGRKRKASKTKSPALNQ) are disordered.

The protein belongs to the universal ribosomal protein uS12 family. Part of the 30S ribosomal subunit. Contacts proteins S8 and S17. May interact with IF1 in the 30S initiation complex.

Its function is as follows. With S4 and S5 plays an important role in translational accuracy. In terms of biological role, interacts with and stabilizes bases of the 16S rRNA that are involved in tRNA selection in the A site and with the mRNA backbone. Located at the interface of the 30S and 50S subunits, it traverses the body of the 30S subunit contacting proteins on the other side and probably holding the rRNA structure together. The combined cluster of proteins S8, S12 and S17 appears to hold together the shoulder and platform of the 30S subunit. The sequence is that of Small ribosomal subunit protein uS12 from Mycoplasmopsis pulmonis (strain UAB CTIP) (Mycoplasma pulmonis).